Reading from the N-terminus, the 229-residue chain is Thiamine import ATP-binding protein ThiQ (229 aa).

In terms of domain architecture, ABC transporter spans leucine 2 to methionine 229. Glycine 32–serine 39 is a binding site for ATP.

Belongs to the ABC transporter superfamily. Thiamine importer (TC 3.A.1.19.1) family. As to quaternary structure, the complex is composed of two ATP-binding proteins (ThiQ), two transmembrane proteins (ThiP) and a solute-binding protein (ThiB).

The protein resides in the cell inner membrane. The enzyme catalyses thiamine(out) + ATP + H2O = thiamine(in) + ADP + phosphate + H(+). Part of the ABC transporter complex ThiBPQ involved in thiamine import. Responsible for energy coupling to the transport system. The polypeptide is Thiamine import ATP-binding protein ThiQ (Jannaschia sp. (strain CCS1)).